A 221-amino-acid polypeptide reads, in one-letter code: uncharacterized protein (221 aa).

Over residues 1–16 (MESSRWDKDPPGERRP) the composition is skewed to basic and acidic residues. The disordered stretch occupies residues 1 to 64 (MESSRWDKDP…SHTPQTNTRR (64 aa)).

This is an uncharacterized protein from Homo sapiens (Human).